A 478-amino-acid chain; its full sequence is Deoxyribodipyrimidine photo-lyase (478 aa).

In terms of domain architecture, Photolyase/cryptochrome alpha/beta spans 2–136 (NVNLMWFRND…IINCFHDSVL (135 aa)). Residue Glu110 participates in (6R)-5,10-methylene-5,6,7,8-tetrahydrofolate binding. FAD contacts are provided by residues Tyr227 and 239 to 243 (TSMLS). Interaction with DNA regions lie at residues 279–286 (ELLWREFY) and 346–347 (NR). 377–379 (DGD) provides a ligand contact to FAD. Position 409 (Gln409) interacts with DNA.

It belongs to the DNA photolyase class-1 family. In terms of assembly, monomer. FAD serves as cofactor. Requires (6R)-5,10-methylene-5,6,7,8-tetrahydrofolate as cofactor.

It carries out the reaction cyclobutadipyrimidine (in DNA) = 2 pyrimidine residues (in DNA).. Functionally, involved in repair of UV radiation-induced DNA damage. Catalyzes the light-dependent monomerization (300-600 nm) of cyclobutyl pyrimidine dimers (in cis-syn configuration), which are formed between adjacent bases on the same DNA strand upon exposure to ultraviolet radiation. The chain is Deoxyribodipyrimidine photo-lyase (phrB) from Buchnera aphidicola subsp. Baizongia pistaciae (strain Bp).